A 156-amino-acid polypeptide reads, in one-letter code: Small ribosomal subunit protein uS7 (156 aa).

The protein belongs to the universal ribosomal protein uS7 family. As to quaternary structure, part of the 30S ribosomal subunit. Contacts proteins S9 and S11.

In terms of biological role, one of the primary rRNA binding proteins, it binds directly to 16S rRNA where it nucleates assembly of the head domain of the 30S subunit. Is located at the subunit interface close to the decoding center, probably blocks exit of the E-site tRNA. The protein is Small ribosomal subunit protein uS7 of Nocardioides sp. (strain ATCC BAA-499 / JS614).